Reading from the N-terminus, the 185-residue chain is MRVMGVDPGLTRCGLSVIESGQGRKVIALDVDVVRTPADEQLHRRLLIISDTVEHWMDTHRPDVIAIERVFANHNANTAMGTAQAGGVIALAAAKRDIDVHFHTPSEVKAAVTGNGRADKAQVTEMVTRILALQAKPTPADAADALALAICHCWRAPMIARMAAAEAMAAEARRKYQAKLKAARA.

Active-site residues include Asp-7, Glu-68, and Asp-141. The Mg(2+) site is built by Asp-7, Glu-68, and Asp-141.

This sequence belongs to the RuvC family. In terms of assembly, homodimer which binds Holliday junction (HJ) DNA. The HJ becomes 2-fold symmetrical on binding to RuvC with unstacked arms; it has a different conformation from HJ DNA in complex with RuvA. In the full resolvosome a probable DNA-RuvA(4)-RuvB(12)-RuvC(2) complex forms which resolves the HJ. It depends on Mg(2+) as a cofactor.

It localises to the cytoplasm. The catalysed reaction is Endonucleolytic cleavage at a junction such as a reciprocal single-stranded crossover between two homologous DNA duplexes (Holliday junction).. Its function is as follows. The RuvA-RuvB-RuvC complex processes Holliday junction (HJ) DNA during genetic recombination and DNA repair. Endonuclease that resolves HJ intermediates. Cleaves cruciform DNA by making single-stranded nicks across the HJ at symmetrical positions within the homologous arms, yielding a 5'-phosphate and a 3'-hydroxyl group; requires a central core of homology in the junction. The consensus cleavage sequence is 5'-(A/T)TT(C/G)-3'. Cleavage occurs on the 3'-side of the TT dinucleotide at the point of strand exchange. HJ branch migration catalyzed by RuvA-RuvB allows RuvC to scan DNA until it finds its consensus sequence, where it cleaves and resolves the cruciform DNA. This chain is Crossover junction endodeoxyribonuclease RuvC, found in Mycobacterium sp. (strain MCS).